The sequence spans 158 residues: Protein shisa-like-2B (158 aa).

Residues 65-85 (IGALVGLGIAALVLLAFVISV) form a helical membrane-spanning segment.

This sequence belongs to the shisa family.

It localises to the membrane. The chain is Protein shisa-like-2B (Shisal2b) from Mus musculus (Mouse).